A 1045-amino-acid polypeptide reads, in one-letter code: Cation efflux system protein CusA (1045 aa).

Transmembrane regions (helical) follow at residues 14 to 34 (FLVL…IINT), 336 to 356 (LSGK…LFLW), 361 to 381 (ALVA…VMHF), 388 to 408 (IMSL…AIVM), 444 to 464 (VGPA…PIFT), 483 to 503 (AMAG…GYWI), 530 to 550 (VLHW…TVLW), 869 to 889 (KLKL…YLAF), 896 to 916 (LLII…LWWM), 926 to 946 (TGFI…LMYL), 983 to 1003 (AMTV…TGAG), and 1010 to 1030 (IAAP…FIIP).

This sequence belongs to the resistance-nodulation-cell division (RND) (TC 2.A.6) family. In terms of assembly, the cus efflux system is composed of CusA, CusB, CusC and CusF.

It is found in the cell inner membrane. Functionally, part of a cation efflux system that mediates resistance to copper and silver. The polypeptide is Cation efflux system protein CusA (cusA) (Escherichia coli O157:H7).